The chain runs to 1451 residues: Copper-transporting ATPase 2 (1451 aa).

Residues 1-646 (MPEQERKVTA…KTEIKQWKKS (646 aa)) are Cytoplasmic-facing. HMA domains are found at residues 57–123 (TTGV…FEAS), 142–208 (AVVK…FEAA), and 256–322 (ATLP…PGYF). Residues C68, C71, C153, C156, C267, and C270 each coordinate Cu(+). The tract at residues 328–353 (DGLEKESGSSSVPSLGSSQRQQEPGP) is disordered. The span at 335–345 (GSSSVPSLGSS) shows a compositional bias: low complexity. Positions 355 to 421 (RTAVLTITGI…AVEDMGFEVS (67 aa)) constitute an HMA 4 domain. S469, S471, and S474 each carry phosphoserine. HMA domains follow at residues 481–547 (QKCF…FEAA) and 557–623 (GDIE…FHAS). Cu(+) is bound by residues C492, C495, C568, and C571. A helical membrane pass occupies residues 647–668 (FLCSLVFGIPVMGLMIYMLIPS). The Extracellular portion of the chain corresponds to 669–690 (SKPHETMVLDHNIIPGLSVLNL). A helical transmembrane segment spans residues 691–710 (IFFILCTFVQFLGGWYFYVQ). Over 711 to 717 (AYKSLRH) the chain is Cytoplasmic. The helical transmembrane segment at 718-738 (KSANMDVLIVLATTIAYAYSL) threads the bilayer. The Extracellular segment spans residues 739 to 757 (VILVVAIAEKAEKSPVTFF). A helical membrane pass occupies residues 758–778 (DTPPMLFVFIALGRWLEHVAK). Topologically, residues 779–912 (SKTSEALAKL…KAPIQQLADR (134 aa)) are cytoplasmic. The chain crosses the membrane as a helical span at residues 913 to 935 (FSGYFVPFIIIISTLTLVVWIII). The Extracellular portion of the chain corresponds to 936 to 965 (GFVDFGIVQKYFPSPSKHISQTEVIIRFAF). A helical membrane pass occupies residues 966-987 (QTSITVLCIACPCSLGLATPTA). The Cytoplasmic segment spans residues 988 to 1310 (VMVGTGVAAQ…LSKRTVRRIR (323 aa)). D1020 acts as the 4-aspartylphosphate intermediate in catalysis. D1255 and D1259 together coordinate Mg(2+). Residues 1311–1328 (VNLVLALIYNMVGIPIAA) form a helical membrane-spanning segment. Residues 1329–1339 (GVFMPIGIVLQ) are Extracellular-facing. Residues 1340-1357 (PWMGSAAASSVSVVLSSL) traverse the membrane as a helical segment. Over 1358–1451 (QLKCYRKPDL…LSDRDEEQCI (94 aa)) the chain is Cytoplasmic. Residues S1384 and S1443 each carry the phosphoserine modification.

This sequence belongs to the cation transport ATPase (P-type) (TC 3.A.3) family. Type IB subfamily. As to quaternary structure, monomer. Interacts with COMMD1/MURR1. Interacts with DCTN4, in a copper-dependent manner. Interacts with ATOX1. Interacts (via C-terminus) with ZBTB16/PLZF. As to expression, expressed in brain, liver, kidney, spleen and stomach. In brain, detected in neuronal cells of the hippocampal formation, olfactory bulbs, cerebellum, cerebral cortex and nuclei in the brainstem. Isoform PINA is expressed during night in adult pineal gland (pinealocytes) and retina. Isoform PINA is not detected in other tissue.

It is found in the golgi apparatus. The protein localises to the trans-Golgi network membrane. Its subcellular location is the late endosome. The enzyme catalyses Cu(+)(in) + ATP + H2O = Cu(+)(out) + ADP + phosphate + H(+). Its function is as follows. Copper ion transmembrane transporter involved in the export of copper out of the cells, such as the efflux of hepatic copper into the bile. The chain is Copper-transporting ATPase 2 (Atp7b) from Rattus norvegicus (Rat).